The primary structure comprises 490 residues: Katanin p60 ATPase-containing subunit A-like 1 (490 aa).

At M1 the chain carries N-acetylmethionine. Residues 96-182 are disordered; the sequence is PAVWPPPVPA…ASDGEIPKFD (87 aa). A compositionally biased stretch (basic and acidic residues) spans 116–127; the sequence is PNREVRPLRKEM. Residues 128–139 are compositionally biased toward low complexity; it reads AGVGARGPVGRA. The segment covering 143 to 169 has biased composition (basic and acidic residues); the sequence is SKSEKPSASRDKDCRARGRDDKGRKNM. S174 is subject to Phosphoserine. 248-255 serves as a coordination point for ATP; it reads GPPGTGKT.

Belongs to the AAA ATPase family. Katanin p60 subunit A1 subfamily. A-like 1 sub-subfamily. As to quaternary structure, interacts with KATNB1 and KATNBL1.

The protein resides in the cytoplasm. It is found in the cytoskeleton. It localises to the spindle pole. The protein localises to the spindle. The catalysed reaction is n ATP + n H2O + a microtubule = n ADP + n phosphate + (n+1) alpha/beta tubulin heterodimers.. Regulates microtubule dynamics in Sertoli cells, a process that is essential for spermiogenesis and male fertility. Severs microtubules in an ATP-dependent manner, promoting rapid reorganization of cellular microtubule arrays. Has microtubule-severing activity in vitro. This is Katanin p60 ATPase-containing subunit A-like 1 from Oryctolagus cuniculus (Rabbit).